Here is a 492-residue protein sequence, read N- to C-terminus: 3,6-anhydro-alpha-L-galactose dehydrogenase (492 aa).

NADP(+) contacts are provided by residues 160–161 (WN), 184–187 (KPSE), and 237–238 (GS). The Proton acceptor role is filled by E259. NADP(+) is bound at residue L260. C293 serves as the catalytic Nucleophile. An NADP(+)-binding site is contributed by E394.

This sequence belongs to the aldehyde dehydrogenase family.

The enzyme catalyses 3,6-anhydro-alpha-L-galactopyranose + NADP(+) + H2O = 3,6-anhydro-L-galactonate + NADPH + 2 H(+). Its activity is regulated as follows. Significantly inhibited by EDTA. Activity is enhanced by Fe(2+), but is strongly inhibited by Mn(2+), Cu(2+), Zn(2+), Ni(2+) and Co(2+). Its function is as follows. Involved in the degradation of 3,6-anhydro-L-galactose, which is the major monomeric sugar of red macroalgae. Catalyzes the oxidation of 3,6-anhydro-L-galactose (AHG) to form 3,6-anhydrogalactonate (AHGA). Shows broad substrate specificity, with maximum activity toward AHG. The enzyme activities toward D-fructose, D-galactose and D-ribose are between 40% and 50% of the maximum, but those toward L-rhamnose, L-glyceraldehyde, D-glyceraldehyde, L-fucose and D-glucose are much lower. In Streptomyces coelicolor (strain ATCC BAA-471 / A3(2) / M145), this protein is 3,6-anhydro-alpha-L-galactose dehydrogenase.